Consider the following 201-residue polypeptide: Recombination protein RecR (201 aa).

The C4-type zinc-finger motif lies at 60–75; that stretch reads CSCCGNVDTSDPCTIC. The 96-residue stretch at 83–178 folds into the Toprim domain; it reads TTLIVVEDVS…RVTRLAHGVP (96 aa).

This sequence belongs to the RecR family.

Its function is as follows. May play a role in DNA repair. It seems to be involved in an RecBC-independent recombinational process of DNA repair. It may act with RecF and RecO. The polypeptide is Recombination protein RecR (Brucella anthropi (strain ATCC 49188 / DSM 6882 / CCUG 24695 / JCM 21032 / LMG 3331 / NBRC 15819 / NCTC 12168 / Alc 37) (Ochrobactrum anthropi)).